The sequence spans 458 residues: Chitin deacetylase 2 (458 aa).

The N-terminal stretch at 1-51 (MIPSTAAAALLTLTAGVALAHPGCGGQEIGRRNVGGPMVYRRDVTDEASAA) is a signal peptide. N-linked (GlcNAc...) asparagine glycosylation is found at asparagine 87, asparagine 99, and asparagine 125. The NodB homology domain maps to 158-348 (MTWGLGFDDG…IKSAFSYIVP (191 aa)). Aspartate 165 acts as the Proton acceptor in catalysis. Aspartate 165 lines the acetate pocket. Aspartate 166 is a Co(2+) binding site. The N-linked (GlcNAc...) asparagine glycan is linked to asparagine 169. Residues histidine 215 and histidine 219 each contribute to the Co(2+) site. Tyrosine 256 provides a ligand contact to acetate. N-linked (GlcNAc...) asparagine glycans are attached at residues asparagine 271 and asparagine 309. The active-site Proton donor is histidine 322. 5 N-linked (GlcNAc...) asparagine glycosylation sites follow: asparagine 326, asparagine 354, asparagine 363, asparagine 378, and asparagine 393. Positions 382–430 (STTQKDGSSSTNTSSSGSGSAAGSASATSSSDDSSSSGSASASSSSSNA) are disordered. A lipid anchor (GPI-anchor amidated serine) is attached at serine 427. A propeptide spans 428-458 (SNASSGALGMFDGLSGVGLVLSGVVAGVMLL) (removed in mature form). N-linked (GlcNAc...) asparagine glycosylation occurs at asparagine 429.

The protein belongs to the polysaccharide deacetylase family. It depends on Co(2+) as a cofactor. Glycosylated.

It is found in the secreted. The protein localises to the cell wall. The protein resides in the cell membrane. It carries out the reaction [(1-&gt;4)-N-acetyl-beta-D-glucosaminyl](n) + n H2O = chitosan + n acetate. Hydrolyzes the N-acetamido groups of N-acetyl-D-glucosamine residues in chitin to form chitosan and acetate. Chitosan is required to anchor melanin to the cell wall, for maintenance of cell wall integrity, and for cytokinesis. The polypeptide is Chitin deacetylase 2 (Cryptococcus neoformans var. neoformans serotype D (strain B-3501A) (Filobasidiella neoformans)).